The following is a 912-amino-acid chain: Protein translocase subunit SecA (912 aa).

ATP is bound by residues Q87, 105–109, and D508; that span reads GEGKT. The disordered stretch occupies residues 865 to 912; the sequence is DEEAAQVQSGNAPLPVSQVTRDEPKVGRNDPCPCGSGKKYKHCHGQLS. Residues C896, C898, C907, and H908 each contribute to the Zn(2+) site. Over residues 902-912 the composition is skewed to basic residues; it reads KKYKHCHGQLS.

It belongs to the SecA family. As to quaternary structure, monomer and homodimer. Part of the essential Sec protein translocation apparatus which comprises SecA, SecYEG and auxiliary proteins SecDF-YajC and YidC. It depends on Zn(2+) as a cofactor.

It localises to the cell inner membrane. The protein localises to the cytoplasm. The catalysed reaction is ATP + H2O + cellular proteinSide 1 = ADP + phosphate + cellular proteinSide 2.. Part of the Sec protein translocase complex. Interacts with the SecYEG preprotein conducting channel. Has a central role in coupling the hydrolysis of ATP to the transfer of proteins into and across the cell membrane, serving both as a receptor for the preprotein-SecB complex and as an ATP-driven molecular motor driving the stepwise translocation of polypeptide chains across the membrane. This Xanthomonas oryzae pv. oryzae (strain PXO99A) protein is Protein translocase subunit SecA.